The sequence spans 1268 residues: uncharacterized protein (1268 aa).

The segment covering 191–206 (KIVSVKPSKSSQQVDV) has biased composition (low complexity). Disordered regions lie at residues 191 to 235 (KIVS…SKKK) and 253 to 273 (NCRS…SKGC). Over residues 223–235 (RKPEKSSQDSKKK) the composition is skewed to basic and acidic residues. The CCHC-type zinc finger occupies 239-256 (PTCFYCNKKGHYATNCRS). Residues 465–644 (EMGVIVPITY…KQVTFLGFVD (180 aa)) form the Reverse transcriptase domain. In terms of domain architecture, Integrase catalytic spans 844–997 (VPEAPWKRIH…TPAECHFGRK (154 aa)). Positions 1092-1268 (GDYSRSSVNP…RRERVRTTWR (177 aa)) are disordered. Polar residues-rich tracts occupy residues 1127–1143 (VTSN…SRIT) and 1160–1169 (GSCSPTNNDV). A compositionally biased stretch (low complexity) spans 1208-1221 (PSTSTGTPRGSTST). Over residues 1222-1249 (QLGQASTRNGSRYTASGRNPSCQGNRYS) the composition is skewed to polar residues. Positions 1257–1268 (TARRERVRTTWR) are enriched in basic and acidic residues.

This is an uncharacterized protein from Caenorhabditis elegans.